Consider the following 559-residue polypeptide: 2,3-bisphosphoglycerate-independent phosphoglycerate mutase (559 aa).

Mn(2+) is bound by residues aspartate 28 and serine 81. Serine 81 functions as the Phosphoserine intermediate in the catalytic mechanism. Substrate-binding positions include histidine 140, 170–171 (RD), arginine 206, arginine 213, 286–289 (RADR), and lysine 361. 5 residues coordinate Mn(2+): aspartate 430, histidine 434, aspartate 471, histidine 472, and histidine 501.

The protein belongs to the BPG-independent phosphoglycerate mutase family. In terms of assembly, monomer. Requires Mn(2+) as cofactor. In terms of tissue distribution, found ubiquitously in germinating seed.

The protein resides in the cytoplasm. The enzyme catalyses (2R)-2-phosphoglycerate = (2R)-3-phosphoglycerate. It functions in the pathway carbohydrate degradation; glycolysis; pyruvate from D-glyceraldehyde 3-phosphate: step 3/5. Functionally, catalyzes the interconversion of 2-phosphoglycerate and 3-phosphoglycerate. This Nicotiana tabacum (Common tobacco) protein is 2,3-bisphosphoglycerate-independent phosphoglycerate mutase.